The following is a 268-amino-acid chain: Tryptophan synthase alpha chain (268 aa).

Residues Glu-49 and Asp-60 each act as proton acceptor in the active site.

The protein belongs to the TrpA family. In terms of assembly, tetramer of two alpha and two beta chains.

The enzyme catalyses (1S,2R)-1-C-(indol-3-yl)glycerol 3-phosphate + L-serine = D-glyceraldehyde 3-phosphate + L-tryptophan + H2O. It functions in the pathway amino-acid biosynthesis; L-tryptophan biosynthesis; L-tryptophan from chorismate: step 5/5. Functionally, the alpha subunit is responsible for the aldol cleavage of indoleglycerol phosphate to indole and glyceraldehyde 3-phosphate. This is Tryptophan synthase alpha chain from Vibrio vulnificus (strain CMCP6).